The primary structure comprises 248 residues: Acetylglutamate kinase (248 aa).

Residues Gly41–Gly42, Arg63, and Asn155 contribute to the substrate site.

It belongs to the acetylglutamate kinase family. ArgB subfamily.

Its subcellular location is the cytoplasm. The enzyme catalyses N-acetyl-L-glutamate + ATP = N-acetyl-L-glutamyl 5-phosphate + ADP. It participates in amino-acid biosynthesis; L-arginine biosynthesis; N(2)-acetyl-L-ornithine from L-glutamate: step 2/4. Functionally, catalyzes the ATP-dependent phosphorylation of N-acetyl-L-glutamate. The protein is Acetylglutamate kinase of Lactiplantibacillus plantarum (strain ATCC BAA-793 / NCIMB 8826 / WCFS1) (Lactobacillus plantarum).